Here is a 612-residue protein sequence, read N- to C-terminus: Alpha-glycerophosphate oxidase (612 aa).

Residue 21-49 (DLLIIGGGITGAGVALQAAASGLDTGLIE) participates in FAD binding. A compositionally biased stretch (basic and acidic residues) spans 398 to 408 (VETSTSEKELD). A disordered region spans residues 398 to 418 (VETSTSEKELDPSAVSRGSSF).

Belongs to the FAD-dependent glycerol-3-phosphate dehydrogenase family. FAD is required as a cofactor.

It localises to the cytoplasm. The enzyme catalyses sn-glycerol 3-phosphate + O2 = dihydroxyacetone phosphate + H2O2. In Streptococcus pyogenes serotype M18 (strain MGAS8232), this protein is Alpha-glycerophosphate oxidase (glpO).